The primary structure comprises 2474 residues: Serine/threonine-protein kinase TOR2 (2474 aa).

The tract at residues 1–62 (MNKYINKYTT…NGPNDSGRVI (62 aa)) is disordered. Phosphothreonine is present on T10. Over residues 25–36 (HRTRKKLTHKSH) the composition is skewed to basic residues. Positions 43-56 (STTSNTDSNHNGPN) are enriched in polar residues. HEAT repeat units follow at residues 588–626 (YSLT…KDDI), 636–674 (HSVS…PQLA), 676–710 (PDNL…VNPA), 756–793 (PYID…VGGK), 797–835 (RYLK…SSGY), 841–879 (LDYP…LDPY), 917–955 (YYPT…NLGL), 1039–1076 (RFVP…FGPN), 1079–1116 (DYSH…NINL), 1118–1155 (EMSS…QLGT), and 1292–1331 (SYQE…DDKP). The 585-residue stretch at 1338-1922 (TLGKYAQKCH…VYPLMVAIKS (585 aa)) folds into the FAT domain. One can recognise a PI3K/PI4K catalytic domain in the interval 2097 to 2421 (FEPVFSVISS…EHKNAIRNAR (325 aa)). Positions 2103-2109 (VISSKQR) are G-loop. A catalytic loop region spans residues 2276–2284 (GLGDRHPSN). An activation loop region spans residues 2296–2321 (HIDFGDCFEAAILREKFPEKVPFRLT). An FATC domain is found at 2442 to 2474 (NDLDVPEQVDKLIQQATSVENLCQHYIGWCPFW).

The protein belongs to the PI3/PI4-kinase family. As to quaternary structure, the target of rapamycin complex 1 (TORC1) is composed of at least KOG1, LST8, TCO89 and either TOR1 (TORC1-A) or TOR2 (TORC1-B). TORC1 binds to and is inhibited by FKBP-rapamycin. Interacts with PIB2; following activation of PIB2 by glutamine. The target of rapamycin complex 2 (TORC2) is composed of at least AVO1, AVO2, BIT61, LST8, TOR2 and TSC11. TORC2 forms a homodimer. Contrary to TORC1, TORC2 does not bind to and is not sensitive to FKBP-rapamycin. Interacts with SLM1 and SLM2.

It localises to the cell membrane. It is found in the vacuole membrane. The enzyme catalyses L-seryl-[protein] + ATP = O-phospho-L-seryl-[protein] + ADP + H(+). The catalysed reaction is L-threonyl-[protein] + ATP = O-phospho-L-threonyl-[protein] + ADP + H(+). It carries out the reaction a 1,2-diacyl-sn-glycero-3-phospho-(1D-myo-inositol) + ATP = a 1,2-diacyl-sn-glycero-3-phospho-(1D-myo-inositol 4-phosphate) + ADP + H(+). Functionally, phosphatidylinositol 3-kinase homolog, component of both TORC1 and TORC2. TORC1 regulates multiple cellular processes to control cell growth in response to environmental signals. Nutrient limitation and environmental stress signals cause inactivation of TORC1. Active TORC1 positively controls ribosome biogenesis via control of rRNA, ribosomal protein and tRNA gene expression, and rRNA processing. TORC1 positively controls protein biosynthesis by regulation of mRNA stability, translation initiation factor activity, and high-affinity amino acid permeases that serve to provide amino acids for use by the translation machinery. TORC1 also promotes growth by sequestering a number of nutrient and general stress-responsive transcription factors in the cytoplasm. TORC1 negatively controls macroautophagy, a process to recycle surplus cytoplasmic mass under nutrient starvation conditions. TORC1 controls many of these processes via TIP41-TAP42-mediated inhibition of the type 2A-related phosphatases PP2A and SIT4. In nutrient-rich conditions, responsible for the phosphorylation of AGC S6 kinase (S6K) YPK3, activating YPK3 kinase activity and promoting phosphorylation of ribosomal protein S6. Phosphorylates kinase SCH9 at 6 amino acids in the C-terminus, activating SCH9 kinase activity to properly regulate ribosome biogenesis, translation initiation, and entry into stationary phase. TORC2 regulates cell cycle-dependent polarization of the actin-cytoskeleton, cell wall integrity, and receptor endocytosis. TORC2 controls polarity of the actin cytoskeleton, which is required for orienting the secretory pathway toward discrete growth sites, via the RHO1/PKC1/MAPK cell integrity pathway by activating the RHO1 guanine nucleotide exchange factor ROM2. TORC2 phosphorylates the AGC kinase YPK2, an upstream effector of the cell integrity pathway. TORC2 negatively regulates calcineurin-dependent stress signaling via phosphorylation of its effector SLM1-SLM2. The sequence is that of Serine/threonine-protein kinase TOR2 (TOR2) from Saccharomyces cerevisiae (strain ATCC 204508 / S288c) (Baker's yeast).